Reading from the N-terminus, the 979-residue chain is Glycine dehydrogenase (decarboxylating) (979 aa).

An N6-(pyridoxal phosphate)lysine modification is found at Lys726.

This sequence belongs to the GcvP family. In terms of assembly, the glycine cleavage system is composed of four proteins: P, T, L and H. It depends on pyridoxal 5'-phosphate as a cofactor.

It carries out the reaction N(6)-[(R)-lipoyl]-L-lysyl-[glycine-cleavage complex H protein] + glycine + H(+) = N(6)-[(R)-S(8)-aminomethyldihydrolipoyl]-L-lysyl-[glycine-cleavage complex H protein] + CO2. Its function is as follows. The glycine cleavage system catalyzes the degradation of glycine. The P protein binds the alpha-amino group of glycine through its pyridoxal phosphate cofactor; CO(2) is released and the remaining methylamine moiety is then transferred to the lipoamide cofactor of the H protein. This chain is Glycine dehydrogenase (decarboxylating), found in Ralstonia pickettii (strain 12J).